A 156-amino-acid chain; its full sequence is Crossover junction endodeoxyribonuclease RuvC (156 aa).

Residues Asp7, Glu67, and Asp140 contribute to the active site. Asp7, Glu67, and Asp140 together coordinate Mg(2+).

The protein belongs to the RuvC family. As to quaternary structure, homodimer which binds Holliday junction (HJ) DNA. The HJ becomes 2-fold symmetrical on binding to RuvC with unstacked arms; it has a different conformation from HJ DNA in complex with RuvA. In the full resolvosome a probable DNA-RuvA(4)-RuvB(12)-RuvC(2) complex forms which resolves the HJ. Mg(2+) serves as cofactor.

It localises to the cytoplasm. It catalyses the reaction Endonucleolytic cleavage at a junction such as a reciprocal single-stranded crossover between two homologous DNA duplexes (Holliday junction).. In terms of biological role, the RuvA-RuvB-RuvC complex processes Holliday junction (HJ) DNA during genetic recombination and DNA repair. Endonuclease that resolves HJ intermediates. Cleaves cruciform DNA by making single-stranded nicks across the HJ at symmetrical positions within the homologous arms, yielding a 5'-phosphate and a 3'-hydroxyl group; requires a central core of homology in the junction. The consensus cleavage sequence is 5'-(A/T)TT(C/G)-3'. Cleavage occurs on the 3'-side of the TT dinucleotide at the point of strand exchange. HJ branch migration catalyzed by RuvA-RuvB allows RuvC to scan DNA until it finds its consensus sequence, where it cleaves and resolves the cruciform DNA. This chain is Crossover junction endodeoxyribonuclease RuvC, found in Rickettsia felis (strain ATCC VR-1525 / URRWXCal2) (Rickettsia azadi).